We begin with the raw amino-acid sequence, 581 residues long: Arginine--tRNA ligase (581 aa).

The 'HIGH' region signature appears at 126-136 (PNLAKEMHVGH).

Belongs to the class-I aminoacyl-tRNA synthetase family. As to quaternary structure, monomer.

It is found in the cytoplasm. It carries out the reaction tRNA(Arg) + L-arginine + ATP = L-arginyl-tRNA(Arg) + AMP + diphosphate. This chain is Arginine--tRNA ligase, found in Shewanella oneidensis (strain ATCC 700550 / JCM 31522 / CIP 106686 / LMG 19005 / NCIMB 14063 / MR-1).